A 242-amino-acid chain; its full sequence is Putative serine/threonine-protein kinase (242 aa).

Positions 49-242 (FSSKNKVGEG…KSDVYSFGVL (194 aa)) constitute a Protein kinase domain. ATP-binding positions include 55–63 (VGEGGCGAV) and K77. The Proton acceptor role is filled by D177.

Belongs to the protein kinase superfamily. Ser/Thr protein kinase family.

The enzyme catalyses L-seryl-[protein] + ATP = O-phospho-L-seryl-[protein] + ADP + H(+). The catalysed reaction is L-threonyl-[protein] + ATP = O-phospho-L-threonyl-[protein] + ADP + H(+). This Helianthus annuus (Common sunflower) protein is Putative serine/threonine-protein kinase.